Here is a 318-residue protein sequence, read N- to C-terminus: MIEIWTEKYRPKSLSEIYGEDENIQKLKSFVEKKEIPHLLFAGSVGTGKTSTAIALAIELFGDSWKENMVEMNASNENGIDVIRNKIKDIARIKPSNPLGFKILFLDEADQLTAEAQAALRRTMEIYSETTRFIFSCNYSSKIIPPIQSRTVVMRFRPVPDEYISRKLQEIAKNEGFQIDEESMHALVEVSAGDMRKAINVLQAVYTSGEISPKKIYEIIGYASPEKIQKMISRAINGLFDEAREIVDGMLIYDGLSGIDIVRSLHSYVRSSMISPKQKIEIIKALADAEFRIVEGSNDRIQLDALIAKLAEIGSRTD.

43-50 (GSVGTGKT) lines the ATP pocket.

Belongs to the activator 1 small subunits family. RfcS subfamily. As to quaternary structure, heteromultimer composed of small subunits (RfcS) and large subunits (RfcL).

Part of the RFC clamp loader complex which loads the PCNA sliding clamp onto DNA. In Thermoplasma acidophilum (strain ATCC 25905 / DSM 1728 / JCM 9062 / NBRC 15155 / AMRC-C165), this protein is Replication factor C small subunit.